The sequence spans 201 residues: Lipoprotein signal peptidase (201 aa).

Helical transmembrane passes span 73–93 (SNAIFLITNTIIVCYLYYLMI) and 97–117 (TIGSFAGYSFVIGGAVGNLID). Active-site residues include aspartate 126 and aspartate 144. The helical transmembrane segment at 135-155 (YSFPVFNLADCFIIIGVIILI) threads the bilayer.

This sequence belongs to the peptidase A8 family.

The protein resides in the cell inner membrane. It catalyses the reaction Release of signal peptides from bacterial membrane prolipoproteins. Hydrolyzes -Xaa-Yaa-Zaa-|-(S,diacylglyceryl)Cys-, in which Xaa is hydrophobic (preferably Leu), and Yaa (Ala or Ser) and Zaa (Gly or Ala) have small, neutral side chains.. Its pathway is protein modification; lipoprotein biosynthesis (signal peptide cleavage). Its function is as follows. This protein specifically catalyzes the removal of signal peptides from prolipoproteins. The chain is Lipoprotein signal peptidase from Rickettsia conorii (strain ATCC VR-613 / Malish 7).